Consider the following 514-residue polypeptide: Xylose import ATP-binding protein XylG (514 aa).

2 ABC transporter domains span residues 7-246 and 263-508; these read FEMR…VGRE and LEAR…IHAE. Position 39–46 (39–46) interacts with ATP; the sequence is GENGAGKS.

Belongs to the ABC transporter superfamily. Xylose importer (TC 3.A.1.2.4) family. In terms of assembly, the complex is composed of two ATP-binding proteins (XylG), two transmembrane proteins (XylH) and a solute-binding protein (XylF).

It is found in the cell inner membrane. The catalysed reaction is D-xylose(out) + ATP + H2O = D-xylose(in) + ADP + phosphate + H(+). In terms of biological role, part of the ABC transporter complex XylFGH involved in xylose import. Responsible for energy coupling to the transport system. This chain is Xylose import ATP-binding protein XylG, found in Ralstonia nicotianae (strain ATCC BAA-1114 / GMI1000) (Ralstonia solanacearum).